Consider the following 164-residue polypeptide: Protein SprT (164 aa).

A SprT-like domain is found at 14–156; it reads QQAETFFKRP…LCKRCRETLV (143 aa). His-69 lines the Zn(2+) pocket. The active site involves Glu-70. His-73 contacts Zn(2+).

This sequence belongs to the SprT family. It depends on Zn(2+) as a cofactor.

The protein localises to the cytoplasm. The polypeptide is Protein SprT (Pseudomonas putida (strain W619)).